Consider the following 124-residue polypeptide: Cytochrome b5-like protein (124 aa).

Residues 5–22 (YLLILIIIYVIKIICRYF) traverse the membrane as a helical segment. The Cytochrome b5 heme-binding domain maps to 49–124 (NQINQVNQVN…ILSKYKITEK (76 aa)). Residues His84 and His108 each coordinate heme.

This sequence belongs to the cytochrome b5 family.

The protein resides in the membrane. Functionally, membrane bound hemoprotein which function as an electron carrier for several membrane bound oxygenases. The protein is Cytochrome b5-like protein of Acanthamoeba polyphaga (Amoeba).